The chain runs to 372 residues: Caytaxin (372 aa).

Positions 1–58 (MGTTEATLRMENVDVRDEWQDEDLPRPLPEDTGVERLGGAVEDSSSPPSTLNLSGAHR) are disordered. Residues 11-29 (ENVDVRDEWQDEDLPRPLP) are compositionally biased toward basic and acidic residues. A compositionally biased stretch (polar residues) spans 43-53 (DSSSPPSTLNL). At Ser-54 the chain carries Phosphoserine. The interval 115–120 (ELEWED) is required for interaction with KLC1. Residues 171–328 (IRPYMKVVTH…CVLQYEEQRL (158 aa)) form the CRAL-TRIO domain. The interval 190–372 (AIIVFAACFL…ATEDQETSMS (183 aa)) is mediates interaction with GLS. A disordered region spans residues 329-372 (RAKRESTRPPQPEFLLPRSEEKPETVEEEDRAAEATEDQETSMS). Residues 354–372 (VEEEDRAAEATEDQETSMS) are compositionally biased toward acidic residues.

As to quaternary structure, interacts with KLC1; may link mitochondria to KLC1 and regulate mitochondria localization into neuron projections. Interacts with GLS; the interaction is direct and may control GLS localization, negatively regulating its activity. Interacts with PIN1 (via WW domain); upon NGF stimulation. The interaction with PIN1 and GLS is competitive. In terms of processing, cleaved by CASP3 and CASP7. The potential C-terminal product released by CASP3 cleavage may inhibit the ERK signaling pathway through MAP2K2. May be ubiquitinated by STUB1. As to expression, neuronal tissues specific. Strongly expressed in brain. Expressed in virtually all parts of the adult brain, including cortex, cerebellum and olfactory bulbs. Enriched in hippocampus, cerebellar cortex, deep cerebellar nuclei, and pontine nuclei (at protein level).

The protein resides in the cell projection. It is found in the axon. Its subcellular location is the dendrite. The protein localises to the presynapse. It localises to the mitochondrion. The protein resides in the growth cone. It is found in the cytoplasm. Functions in the development of neural tissues, particularly the postnatal maturation of the cerebellar cortex. May play a role in neurotransmission through regulation of glutaminase/GLS, an enzyme responsible for the production in neurons of the glutamate neurotransmitter. Alternatively, may regulate the localization of mitochondria within axons and dendrites. The sequence is that of Caytaxin (Atcay) from Mus musculus (Mouse).